A 426-amino-acid chain; its full sequence is Putative phosphate permease CPn_0680/CP_0067/CPj0680/CpB0707 (426 aa).

Helical transmembrane passes span 1 to 21, 42 to 62, 87 to 107, 112 to 132, 137 to 157, 180 to 200, 207 to 227, 260 to 280, 313 to 333, 364 to 384, and 399 to 419; these read MLPLIIFVLLCGFYTSWNIGA, AVVIAAIFEFFGALLLGDRVA, TAALLATGVWLQLASFFGWPV, SIVGAVIGFGLVLGKGTIIYW, IILISWILSPFMGGCVAYLIF, FLAALVIMTLGTVMISGGVIL, WAVSGVLVCGLLSYIITFYYV, LVVERIFAYLQIIVACFMAFA, LMAFGGIGLVIGLAIWGWRVI, ILGLPISTTHVVVGAVLGIGL, and IVLSWFITLPAGALLSILFFF.

This sequence belongs to the inorganic phosphate transporter (PiT) (TC 2.A.20) family.

Its subcellular location is the cell membrane. In terms of biological role, potential transporter for phosphate. This Chlamydia pneumoniae (Chlamydophila pneumoniae) protein is Putative phosphate permease CPn_0680/CP_0067/CPj0680/CpB0707.